A 455-amino-acid chain; its full sequence is tRNA modification GTPase MnmE (455 aa).

Positions 25, 85, and 124 each coordinate (6S)-5-formyl-5,6,7,8-tetrahydrofolate. Positions 221-375 constitute a TrmE-type G domain; the sequence is GLSTAIIGRP…IEERINKLFF (155 aa). K(+) is bound at residue asparagine 231. GTP-binding positions include 231–236, 250–256, and 275–278; these read NVGKSS, TDIEGTT, and DTAG. Serine 235 lines the Mg(2+) pocket. K(+) contacts are provided by threonine 250, isoleucine 252, and threonine 255. Threonine 256 is a binding site for Mg(2+). A (6S)-5-formyl-5,6,7,8-tetrahydrofolate-binding site is contributed by lysine 455.

This sequence belongs to the TRAFAC class TrmE-Era-EngA-EngB-Septin-like GTPase superfamily. TrmE GTPase family. As to quaternary structure, homodimer. Heterotetramer of two MnmE and two MnmG subunits. The cofactor is K(+).

It localises to the cytoplasm. Its function is as follows. Exhibits a very high intrinsic GTPase hydrolysis rate. Involved in the addition of a carboxymethylaminomethyl (cmnm) group at the wobble position (U34) of certain tRNAs, forming tRNA-cmnm(5)s(2)U34. The sequence is that of tRNA modification GTPase MnmE from Streptococcus mutans serotype c (strain ATCC 700610 / UA159).